The primary structure comprises 134 residues: Cytochrome c-550 (134 aa).

Gln1 bears the Pyrrolidone carboxylic acid mark. Positions 15, 18, 19, and 100 each coordinate heme c.

In terms of processing, binds 1 heme c group covalently per subunit.

Its function is as follows. Electron donor for nitrous-oxide reductase. The protein is Cytochrome c-550 of Paracoccus pantotrophus (Thiosphaera pantotropha).